Reading from the N-terminus, the 407-residue chain is 12S rRNA N(4)-cytidine methyltransferase METTL15 (407 aa).

The tract at residues 44 to 63 (EAQEETDQTGIQELHRSQDR) is disordered. S-adenosyl-L-methionine contacts are provided by residues 100–102 (GGH), Asp-119, Phe-146, Asp-169, and Gln-176. Ser-358 carries the phosphoserine modification. The tract at residues 386–407 (EDEDVQDNPRGRSAKLRAAIKL) is disordered. Residues 397 to 407 (RSAKLRAAIKL) show a composition bias toward basic residues.

The protein belongs to the methyltransferase superfamily. RsmH family.

Its subcellular location is the mitochondrion matrix. The enzyme catalyses cytidine(839) in 12S rRNA + S-adenosyl-L-methionine = N(4)-methylcytidine(839) in 12S rRNA + S-adenosyl-L-homocysteine + H(+). Its function is as follows. N4-methylcytidine (m4C) methyltransferase responsible for the methylation of position C839 in mitochondrial 12S rRNA. Involved in the stabilization of 12S rRNA folding, therefore facilitating the assembly of the mitochondrial small ribosomal subunits. This chain is 12S rRNA N(4)-cytidine methyltransferase METTL15 (METTL15), found in Bos taurus (Bovine).